The following is a 464-amino-acid chain: Serine protease PepD (464 aa).

The interval 1-71 is disordered; the sequence is MAKLARVVGL…TQYRQPYEAL (71 aa). The Cytoplasmic segment spans residues 1-100; sequence MAKLARVVGL…GMVRQRPRAG (100 aa). Residues 39 to 48 show a composition bias toward low complexity; the sequence is QGQQQTYSQQ. Residues 101–121 form a helical membrane-spanning segment; that stretch reads MLAIGAVTIAVVSAGIGGAAA. At 122 to 464 the chain is on the periplasmic side; the sequence is SLVGFNRAPA…VQVTLGKAEQ (343 aa). Catalysis depends on charge relay system residues H197, D236, and S317. The region spanning 368–449 is the PDZ domain; the sequence is LISTGKASHA…TVALTFQDPS (82 aa).

It belongs to the peptidase S1C family. Homotrimer. Interacts with numerous proteins, including the 35 kDa antigen PspA.

The protein resides in the cell inner membrane. Its subcellular location is the secreted. It localises to the cell wall. It catalyses the reaction Acts on substrates that are at least partially unfolded. The cleavage site P1 residue is normally between a pair of hydrophobic residues, such as Val-|-Val.. Probably regulates its own activity by autocleavage, which removes the PDZ domain. Inhibited by the serine protease inhibitor diisopropylfluorophosphate (DFP). Inhibited by fluoroquinolone such as ciprofloxacin, moxifloxacin and ofloxacin and their analogs. Required for virulence. Acts both as a protease, which degrades and/or refolds damaged substrate targets, and as a chaperone. Plays an important role in the stress response network mediated through the two-component regulatory system MprAB and SigE signaling networks. May utilize its PDZ domain to recognize and process misfolded proteins at the cell membrane, leading to activation of the MprAB and SigE signaling pathways and subsequent establishment of a positive feedback loop that facilitates bacterial adaptation. Interacts with and potentially cleaves several proteins, including the 35 kDa antigen PspA. Proteolytic cleavage of PspA may help to maintain cell envelope homeostasis in Mycobacterium and regulate specific stress response pathways during periods of extracytoplasmic stress. In vitro, exhibits proteolytic activity against the artificial substrate beta-casein. In Mycobacterium tuberculosis (strain ATCC 25618 / H37Rv), this protein is Serine protease PepD.